A 433-amino-acid polypeptide reads, in one-letter code: METGGGGDGTGDICCLSYNQDCTSVAIGMRSGYKLYSLSNVERLDLVHESCEAKDVYIVERLFSSSLVVVVSHAKPRQMNVLHFKKGTEICNYNYSDNILSIRLNRQRLIVCLEESIYIHNIKDMKLLKTLLDTPRNPHGLCTLSINHSNSYLAYPGSSSTGEVSLYDANCLKCECTIPAHDSPLAAIAFNSTGTKLASASEKGTVIRVFSIPDGQKLYEFRRGMKRYVNISSLVFSMDSQFLCASSNTETVHVFKLEQLPERSEENASWTGYMGKMFMAASNYLPTQVSDMMNQDRAFATVRLNFSGQKNACTLVTIQKLPRLLVTSSSGHLYVYNLDPQDGGECVLIKKHSLLGSAKSETDGDSDAESPVPVSYAATVARPSSAPALSTITGYSEDGGTLRGEVIPEHELAVGPVCLDDEKEFPPVSIKNP.

The short motif at 127-132 (LLKTLL) is the Nuclear receptor interaction element. WD repeat units lie at residues 136-177 (RNPH…CECT) and 180-220 (AHDS…KLYE). The L/FRRG motif signature appears at 221–224 (FRRG). WD repeat units lie at residues 226–265 (KRYV…ERSE) and 296–346 (DRAF…GGEC).

This sequence belongs to the WD repeat PROPPIN family.

Its subcellular location is the golgi apparatus. It is found in the trans-Golgi network. It localises to the endosome. The protein resides in the cytoplasmic vesicle. The protein localises to the clathrin-coated vesicle. Its subcellular location is the preautophagosomal structure membrane. It is found in the cytoplasm. It localises to the cytoskeleton. Its function is as follows. Component of the autophagy machinery that controls the major intracellular degradation process by which cytoplasmic materials are packaged into autophagosomes and delivered to lysosomes for degradation. Plays an important role in starvation- and calcium-mediated autophagy, as well as in mitophagy. Functions downstream of the ulk1 and PI3-kinases that produce phosphatidylinositol 3-phosphate (PtdIns3P) on membranes of the endoplasmic reticulum once activated. Binds phosphatidylinositol 3-phosphate (PtdIns3P), and maybe other phosphoinositides including PtdIns3,5P2 and PtdIns5P, and is recruited to phagophore assembly sites at the endoplasmic reticulum membranes. There, it assists wipi2 in the recruitment of atg12-atg5-atg16l1, a complex that directly controls the elongation of the nascent autophagosomal membrane. Together with wdr45/wipi4, promotes atg2 (atg2a or atg2b)-mediated lipid transfer by enhancing atg2-association with phosphatidylinositol 3-monophosphate (PI3P)-containing membranes. The sequence is that of WD repeat domain phosphoinositide-interacting protein 1 (wipi1) from Xenopus laevis (African clawed frog).